A 2063-amino-acid chain; its full sequence is Nuclear receptor coactivator 6 (2063 aa).

The tract at residues 1 to 928 is TBP/GTF2A-binding region; sequence MVLDDLPNLE…PPRKKKNSQQ (928 aa). The tract at residues 1–1057 is CREBBP-binding region; the sequence is MVLDDLPNLE…LPVSQNVHPP (1057 aa). Residues 1–1310 are NCOA1-binding region; it reads MVLDDLPNLE…QTHKLDSVVV (1310 aa). The residue at position 95 (arginine 95) is an Asymmetric dimethylarginine. Disordered regions lie at residues 184-251, 281-549, and 789-811; these read IPPG…VNRQ, QQQQ…APQL, and RPPG…ANND. The segment covering 281 to 300 has biased composition (low complexity); it reads QQQQQLQARPPQQHQQQQPQ. 5 stretches are compositionally biased toward polar residues: residues 353–368, 379–406, 417–453, 462–502, and 522–549; these read MQQQ…TVQT, GSQQ…QMKS, PLQQ…QQQM, PLPQ…QGPQ, and GQAN…APQL. Residues 773–927 are NCOA6IP-binding region; it reads VNNSPSQVMG…KPPRKKKNSQ (155 aa). Phosphoserine; by MAPK; in vitro is present on serine 884. An LXXLL motif 1 motif is present at residues 887–891; that stretch reads LVNLL. Disordered stretches follow at residues 899–1278, 1310–1353, and 1448–1474; these read HFGV…LNPT, VNSG…KAPK, and EVKM…PSVE. The segment covering 903–912 has biased composition (low complexity); the sequence is NNKQNNTNAN. Positions 913–925 are enriched in basic residues; sequence KPKKKKPPRKKKN. A compositionally biased stretch (low complexity) spans 982 to 992; the sequence is PLQQMPPQLMQ. The span at 995–1020 shows a compositional bias: pro residues; it reads APPPQPPQQQPQPQLPQQQQPPPPSQ. Over residues 1021 to 1041 the composition is skewed to low complexity; it reads PQSQQQQQQQQQMMMMLMMQQ. Arginine 1047 and arginine 1058 each carry asymmetric dimethylarginine. Residues 1063-1075 show a composition bias toward polar residues; it reads PDSQRMPMQQSGS. Position 1096 is an asymmetric dimethylarginine (arginine 1096). 3 stretches are compositionally biased toward polar residues: residues 1104-1125, 1173-1191, and 1202-1214; these read PLGS…SSSP, LSAT…SLPS, and APTQ…TPNR. The segment covering 1219-1232 has biased composition (pro residues); it reads PYYPQTPNNRPPST. Over residues 1310-1320 the composition is skewed to polar residues; sequence VNSGKQSNSGA. The span at 1322–1345 shows a compositional bias: low complexity; the sequence is KRASPSNSRRSSPGSSRKTTPSPG. The LXXLL motif 2 signature appears at 1491 to 1495; that stretch reads LSQLL. An EP300/CRSP3-binding region region spans residues 1641–2063; the sequence is SEGQSAAQSN…AVQSKRRKSK (423 aa). The interval 1738–1820 is disordered; it reads ATPVQLPSPP…VSSSKGKGKV (83 aa). Residues 1750–1763 show a composition bias toward low complexity; that stretch reads SSPVVPSHPPVQQV. Positions 1773–1798 are enriched in polar residues; it reads PQVNTSADQNTLPSSQSTTMVSPLLT. Over residues 1799-1815 the composition is skewed to low complexity; that stretch reads NSPGSSGNRRSPVSSSK. Residues lysine 1819 and lysine 1822 each carry the N6-acetyllysine modification. Disordered regions lie at residues 1837–1908 and 1995–2063; these read GSLE…LPGG and IVSG…RKSK. Over residues 2002 to 2011 the composition is skewed to basic and acidic residues; the sequence is EPKEIVEKSK. Serine 2018 carries the phosphoserine modification.

In terms of assembly, monomer and homodimer. Interacts with RBM39. Interacts in vitro with the basal transcription factors GTF2A and TBP, suggesting an autonomous transactivation function. Interacts with NCOA1, CRSP3, RBM14, the histone acetyltransferases EP300 and CREBBP, and with the methyltransferases NCOA6IP and PRMT2/HRMT1L1. Component of the MLL2/3 complex (also named ASCOM complex), at least composed of KMT2D/MLL2 or KMT2C/MLL3, ASH2L, RBBP5, WDR5, NCOA6, DPY30, KDM6A, PAXIP1/PTIP, PAGR1 and alpha- and beta-tubulin. Interacts with ZNF335; may enhance ligand-dependent transcriptional activation by nuclear hormone receptors. In terms of processing, phosphorylated by PRKDC. Phosphorylation on Ser-884 leads to a strong decrease in binding to ESR1 and ESR2. As to expression, ubiquitous. Highly expressed in brain, prostate, testis and ovary; weakly expressed in lung, thymus and small intestine.

It localises to the nucleus. In terms of biological role, nuclear receptor coactivator that directly binds nuclear receptors and stimulates the transcriptional activities in a hormone-dependent fashion. Coactivates expression in an agonist- and AF2-dependent manner. Involved in the coactivation of different nuclear receptors, such as for steroids (GR and ERs), retinoids (RARs and RXRs), thyroid hormone (TRs), vitamin D3 (VDR) and prostanoids (PPARs). Probably functions as a general coactivator, rather than just a nuclear receptor coactivator. May also be involved in the coactivation of the NF-kappa-B pathway. May coactivate expression via a remodeling of chromatin and its interaction with histone acetyltransferase proteins. The sequence is that of Nuclear receptor coactivator 6 (NCOA6) from Homo sapiens (Human).